Reading from the N-terminus, the 953-residue chain is MDVAESPERDPHSPEDEEQPQGLSDDDILRDSGSDQDLDGAGVRASDLEDEESAARGPSQEEEDNHSDEEDRASEPKSQDQDSEVNELSRGPTSSPCEEEGDEGEEDRTSDLRDEASSVTRELDEHELDYDEEVPEEPAPAVQEDEAEKAGAEDDEEKGEGTPREEGKAGVQSVGEKESLEAAKEKKKEDDDGEIDDGEIDDDDLEEGEVKDPSDRKVRPRPTCRFFMKGNCTWGMNCRFIHPGVNDKGNYSLITKADPFPPNGAPPLGPHPLMPANPWGGPVVDEILPPPPPEPPTESAWERGLRHAKEVLKKATIRKEQEPDFEEKRFTVTIGEDEREFDKENEVFRDWNSRIPRDVRDTVLEPYADPYYDYEIERFWRGGQYENFRVQYTETEPYHNYRERERERERENRQRERERERERDRERERRQRERERERERERDKERQRRKEEWERERAKRDEKDRQHRDRDREKEREKEKGKPKPRSPQPPSRQAEPPKKEAATTGPQVKRADEWKDPWRRSKSPKKKLGVSVSPSRARRRRKTSASSASASNSSRSSSRSSSYSGSGSSRSRSRSSSYSSYSSRSSRHSSFSGSRSRSRSFSSSPSPSPTPSPHRPSIRTKGEPAPPPGKAGEKSVKKPAPPPAPPQATKTTAPVPEPTKPGDPREARRKERPARTPPRRRTLSGSGSGSGSSYSGSSSRSRSLSVSSVSSVSSATSSSSSAHSVDSEDMYADLASPVSSASSRSPAPAQTRKEKGKSKKEDGVKEEKRKRDSSTQPPKSAKPPAGGKSSQQPSTPQQAPPGQPQQGTFVAHKEIKLTLLNKAADKGSRKRYEPSDKDRQSPPPAKRPNTSPDRGSRDRKSGGRLGSPKPERQRGQNSKAPAAPADRKRQLSPQSKSSSKVTSVPGKASDPGAASTKSGKASTLSRREELLKQLKAVEDAIARKRAKIPGKA.

Met1 bears the N-acetylmethionine mark. Residues 1–14 (MDVAESPERDPHSP) show a composition bias toward basic and acidic residues. 2 disordered regions span residues 1–222 (MDVA…RPRP) and 391–928 (QYTE…LSRR). Position 6 is a phosphoserine (Ser6). The span at 15-26 (EDEEQPQGLSDD) shows a compositional bias: acidic residues. Phosphoserine occurs at positions 34, 46, 53, 59, 67, 74, 78, 83, and 95. Over residues 60 to 72 (QEEEDNHSDEEDR) the composition is skewed to acidic residues. The span at 97-106 (CEEEGDEGEE) shows a compositional bias: acidic residues. A coiled-coil region spans residues 105–134 (EEDRTSDLRDEASSVTRELDEHELDYDEEV). The segment covering 107-124 (DRTSDLRDEASSVTRELD) has biased composition (basic and acidic residues). Thr109 is subject to Phosphothreonine. Phosphoserine is present on residues Ser110 and Ser118. 2 stretches are compositionally biased toward acidic residues: residues 125–136 (EHELDYDEEVPE) and 143–158 (QEDEAEKAGAEDDEEK). Basic and acidic residues predominate over residues 159 to 168 (GEGTPREEGK). Residue Thr162 is modified to Phosphothreonine. Residues Ser173 and Ser179 each carry the phosphoserine modification. The span at 175-190 (GEKESLEAAKEKKKED) shows a compositional bias: basic and acidic residues. The span at 191–207 (DDGEIDDGEIDDDDLEE) shows a compositional bias: acidic residues. Residues 208-217 (GEVKDPSDRK) show a composition bias toward basic and acidic residues. A C3H1-type zinc finger spans residues 219 to 245 (RPRPTCRFFMKGNCTWGMNCRFIHPGV). The span at 396–482 (EPYHNYRERE…EKEREKEKGK (87 aa)) shows a compositional bias: basic and acidic residues. The stretch at 399–464 (HNYRERERER…RERAKRDEKD (66 aa)) forms a coiled coil. Phosphoserine is present on Ser487. A Glycyl lysine isopeptide (Lys-Gly) (interchain with G-Cter in SUMO2) cross-link involves residue Lys510. Basic and acidic residues predominate over residues 510–520 (KRADEWKDPWR). Residues Ser532, Ser534, and Ser536 each carry the phosphoserine modification. Positions 545 to 606 (SASSASASNS…SRSRSFSSSP (62 aa)) are enriched in low complexity. Residues Lys622 and Lys661 each participate in a glycyl lysine isopeptide (Lys-Gly) (interchain with G-Cter in SUMO2) cross-link. Residues 661 to 670 (KPGDPREARR) are compositionally biased toward basic and acidic residues. Low complexity-rich tracts occupy residues 692–725 (GSSYSGSSSRSRSLSVSSVSSVSSATSSSSSAHS) and 736–750 (ASPVSSASSRSPAPA). The segment covering 760–774 (KKEDGVKEEKRKRDS) has biased composition (basic and acidic residues). Lys766 is covalently cross-linked (Glycyl lysine isopeptide (Lys-Gly) (interchain with G-Cter in SUMO2)). Low complexity predominate over residues 778–798 (PPKSAKPPAGGKSSQQPSTPQ). Lys814 is modified (N6-acetyllysine). Residue Lys817 forms a Glycyl lysine isopeptide (Lys-Gly) (interchain with G-Cter in SUMO2) linkage. Over residues 824–841 (AADKGSRKRYEPSDKDRQ) the composition is skewed to basic and acidic residues. 5 positions are modified to phosphoserine: Ser842, Ser852, Ser868, Ser893, and Ser896. The segment covering 893 to 906 (SPQSKSSSKVTSVP) has biased composition (low complexity). Residue Lys908 forms a Glycyl lysine isopeptide (Lys-Gly) (interchain with G-Cter in SUMO2) linkage. Over residues 916 to 925 (STKSGKASTL) the composition is skewed to polar residues. Positions 921–950 (KASTLSRREELLKQLKAVEDAIARKRAKIP) form a coiled coil.

Interacts with ZFC3H1 in a RNase-insensitive manner.

The protein resides in the nucleus. The protein is Zinc finger CCCH domain-containing protein 18 of Homo sapiens (Human).